Consider the following 263-residue polypeptide: Probable elongation factor 1-beta/1-delta 2 (263 aa).

N-acetylserine is present on serine 2. Residues 112–153 are disordered; sequence QGQTSSVAAPAAAPAAAKEEAAGDDDFDLFGSEDEEEDEEKK. Positions 133–150 are enriched in acidic residues; that stretch reads AGDDDFDLFGSEDEEEDE.

Belongs to the EF-1-beta/EF-1-delta family. EF-1 is composed of 4 subunits: alpha, beta, delta, and gamma.

EF-1-beta and EF-1-delta stimulate the exchange of GDP bound to EF-1-alpha to GTP. This chain is Probable elongation factor 1-beta/1-delta 2, found in Caenorhabditis elegans.